We begin with the raw amino-acid sequence, 704 residues long: Elongation factor G (704 aa).

Residues 10–290 (KKVRNIGIMA…AVVDYLPSPL (281 aa)) enclose the tr-type G domain. Residues 19–26 (AHIDAGKT), 83–87 (DTPGH), and 137–140 (NKMD) contribute to the GTP site.

The protein belongs to the TRAFAC class translation factor GTPase superfamily. Classic translation factor GTPase family. EF-G/EF-2 subfamily.

It is found in the cytoplasm. Catalyzes the GTP-dependent ribosomal translocation step during translation elongation. During this step, the ribosome changes from the pre-translocational (PRE) to the post-translocational (POST) state as the newly formed A-site-bound peptidyl-tRNA and P-site-bound deacylated tRNA move to the P and E sites, respectively. Catalyzes the coordinated movement of the two tRNA molecules, the mRNA and conformational changes in the ribosome. This chain is Elongation factor G, found in Kocuria rhizophila (strain ATCC 9341 / DSM 348 / NBRC 103217 / DC2201).